Here is a 53-residue protein sequence, read N- to C-terminus: Large ribosomal subunit protein bL32c (53 aa).

Residues 1–21 (MAVPKKRTSKSKKKSRRSHWI) form a disordered region.

Belongs to the bacterial ribosomal protein bL32 family.

It is found in the plastid. The protein resides in the chloroplast. The sequence is that of Large ribosomal subunit protein bL32c (rpl32) from Cyanidium caldarium (Red alga).